Here is a 243-residue protein sequence, read N- to C-terminus: Ribonuclease 3 (243 aa).

Residues Asn15 to Gly144 enclose the RNase III domain. Glu57 contacts Mg(2+). Asp61 is an active-site residue. Mg(2+)-binding residues include Asn130 and Glu133. Glu133 is a catalytic residue. Residues Asp169–Asn238 enclose the DRBM domain.

The protein belongs to the ribonuclease III family. In terms of assembly, homodimer. Mg(2+) serves as cofactor.

The protein localises to the cytoplasm. It catalyses the reaction Endonucleolytic cleavage to 5'-phosphomonoester.. Digests double-stranded RNA. Involved in the processing of primary rRNA transcript to yield the immediate precursors to the large and small rRNAs (23S and 16S). Processes some mRNAs, and tRNAs when they are encoded in the rRNA operon. Processes pre-crRNA and tracrRNA of type II CRISPR loci if present in the organism. In Wolbachia sp. subsp. Brugia malayi (strain TRS), this protein is Ribonuclease 3.